We begin with the raw amino-acid sequence, 200 residues long: Recombination protein RecR (200 aa).

The C4-type zinc finger occupies 59–74 (CSVCGSLDTSDPCAIC). The region spanning 82–177 (RLLCVVEEVG…SVTMLARGVP (96 aa)) is the Toprim domain.

The protein belongs to the RecR family.

May play a role in DNA repair. It seems to be involved in an RecBC-independent recombinational process of DNA repair. It may act with RecF and RecO. In Caulobacter sp. (strain K31), this protein is Recombination protein RecR.